The sequence spans 367 residues: Alpha-2-HS-glycoprotein (367 aa).

Positions 1–18 (MKSLVLLLCLAQLWGCHS) are cleaved as a signal peptide. The 107-residue stretch at 27–133 (YRQPNCDDPE…KFSVVYAKCD (107 aa)) folds into the Cystatin fetuin-A-type 1 domain. Disulfide bonds link Cys-32–Cys-358, Cys-89–Cys-100, Cys-114–Cys-132, Cys-146–Cys-149, Cys-208–Cys-219, and Cys-230–Cys-247. Position 134 is a phosphoserine (Ser-134). A phosphoserine; by FAM20C mark is found at Ser-135 and Ser-138. In terms of domain architecture, Cystatin fetuin-A-type 2 spans 144 to 255 (KVCQDCPLLA…TCMVFQTQPV (112 aa)). N-linked (GlcNAc...) (complex) asparagine glycans are attached at residues Asn-156 and Asn-176. The tract at residues 255-298 (VSSQPQPEGANEAVPTPVVDPDAPPSPPLGAPGLPPAGSPPDSH) is disordered. O-linked (GalNAc...) threonine glycosylation occurs at Thr-270. Residues 276–293 (DAPPSPPLGAPGLPPAGS) show a composition bias toward pro residues. O-linked (GalNAc...) serine glycosylation is found at Ser-280 and Ser-293. Residues 301–340 (LAAPPGHQLHRAHYDLRHTFMGVVSLGSPSGEVSHPRKTR) constitute a propeptide, connecting peptide. The residue at position 319 (Thr-319) is a Phosphothreonine; by FAM20C. 3 positions are modified to phosphoserine; by FAM20C: Ser-325, Ser-328, and Ser-330. O-linked (GalNAc...) threonine glycosylation is found at Thr-339 and Thr-341. Ser-346 carries O-linked (GalNAc...) serine glycosylation.

This sequence belongs to the fetuin family. Alpha-2-HS glycoprotein derives from this precursor, when the connecting peptide is cleaved off. The two chains A and B are held together by a single disulfide bond. Phosphorylated by FAM20C in the extracellular medium. Post-translationally, O- and N-glycosylated. O-glycosylated with core 1 or possibly core 8 glycans. N-glycan at Asn-156: Hex5HexNAc4; N-glycan heterogeneity at Asn-176: Hex5HexNAc4 (major) and Hex6HexNAc5 (minor). As to expression, synthesized in liver and selectively concentrated in bone matrix. Secreted in plasma. It is also found in dentin in much higher quantities than other plasma proteins.

The protein resides in the secreted. Promotes endocytosis, possesses opsonic properties and influences the mineral phase of bone. Shows affinity for calcium and barium ions. In Homo sapiens (Human), this protein is Alpha-2-HS-glycoprotein (AHSG).